The following is a 255-amino-acid chain: Triosephosphate isomerase (255 aa).

10-12 (NWK) contributes to the substrate binding site. The active-site Electrophile is the His-96. The active-site Proton acceptor is Glu-169. Substrate is bound by residues Gly-175, Ser-214, and 235 to 236 (GG).

The protein belongs to the triosephosphate isomerase family. In terms of assembly, homodimer.

It is found in the cytoplasm. The catalysed reaction is D-glyceraldehyde 3-phosphate = dihydroxyacetone phosphate. It functions in the pathway carbohydrate biosynthesis; gluconeogenesis. Its pathway is carbohydrate degradation; glycolysis; D-glyceraldehyde 3-phosphate from glycerone phosphate: step 1/1. Involved in the gluconeogenesis. Catalyzes stereospecifically the conversion of dihydroxyacetone phosphate (DHAP) to D-glyceraldehyde-3-phosphate (G3P). The chain is Triosephosphate isomerase from Coxiella burnetii (strain Dugway 5J108-111).